The sequence spans 349 residues: tRNA pseudouridine synthase D (349 aa).

Residue Phe-26 coordinates substrate. The Nucleophile role is filled by Asp-79. Asn-128 contacts substrate. Residues Gly-154 to Leu-302 enclose the TRUD domain. Residue Phe-328 participates in substrate binding.

The protein belongs to the pseudouridine synthase TruD family.

It carries out the reaction uridine(13) in tRNA = pseudouridine(13) in tRNA. Its function is as follows. Responsible for synthesis of pseudouridine from uracil-13 in transfer RNAs. The chain is tRNA pseudouridine synthase D from Yersinia pseudotuberculosis serotype O:1b (strain IP 31758).